Consider the following 196-residue polypeptide: Holliday junction resolvase RecU (196 aa).

Residues threonine 82, aspartate 84, glutamate 97, and glutamine 116 each contribute to the Mg(2+) site.

It belongs to the RecU family. Requires Mg(2+) as cofactor.

It localises to the cytoplasm. The enzyme catalyses Endonucleolytic cleavage at a junction such as a reciprocal single-stranded crossover between two homologous DNA duplexes (Holliday junction).. In terms of biological role, endonuclease that resolves Holliday junction intermediates in genetic recombination. Cleaves mobile four-strand junctions by introducing symmetrical nicks in paired strands. Promotes annealing of linear ssDNA with homologous dsDNA. Required for DNA repair, homologous recombination and chromosome segregation. This is Holliday junction resolvase RecU from Oceanobacillus iheyensis (strain DSM 14371 / CIP 107618 / JCM 11309 / KCTC 3954 / HTE831).